Here is a 427-residue protein sequence, read N- to C-terminus: O-methyltransferase FrzF (427 aa).

Aspartate 281 serves as a coordination point for S-adenosyl-L-methionine. Catalysis depends on histidine 327, which acts as the Proton acceptor.

This sequence belongs to the class I-like SAM-binding methyltransferase superfamily. Cation-independent O-methyltransferase family. Homodimer.

It carries out the reaction (1S,4S)-4-[(4-hydroxyphenyl)methyl]-2,5-diazaspiro[bicyclo[3.2.1]octane-6,1'-cyclohexan]-4'-one + S-adenosyl-L-methionine = (1S,4S)-4-[(4-methoxyphenyl)methyl]-2,5-diazaspiro[bicyclo[3.2.1]octane-6,1'-cyclohexan]-4'-one + S-adenosyl-L-homocysteine + H(+). It catalyses the reaction (1S,4S)-4-[(4-hydroxyphenyl)methyl]-2-methyl-2,5-diazaspiro[bicyclo[3.2.1]octane-6,1'-cyclohexan]-4'-one + S-adenosyl-L-methionine = (1S,4S)-4-[(4-methoxyphenyl)methyl]-2-methyl-2,5-diazaspiro[bicyclo[3.2.1]octane-6,1'-cyclohexan]-4'-one + S-adenosyl-L-homocysteine + H(+). It functions in the pathway secondary metabolite biosynthesis. Its function is as follows. O-methyltransferase; part of the gene cluster that mediates the biosynthesis of the alkaloid (-)-FR901483, a potent immunosuppressant that shows efficacy in animal models and a probable inhibitor of purine nucleotide biosynthesis by targeting phosphoribosylpyrophosphate amidotransferase (PPAT). Within the pathway, FrzF methylates the phenolic oxygen at position C4. The biosynthesis of (-)-FR901483 starts with the condensation of two L-tyrosines to yield (S,S)-dityrosyl-piperazine. This process occurs in 3 steps with the non-canonical nonribosomal peptide synthetase FrzA catalyzing the reduction of L-tyrosine into L-tyrosinal, the spontaneous condensation of 2 L-tyrosinal units, and the subsequent reduction by the NmrA-like family domain-containing oxidoreductase FrzB. The cytochrome P450 monooxygenase FrzC then performs coupling between N10 and C1' to morph the piperazine into a 1,4-diazabicyclo[3.2.1]octane spiro-fused to a 2,5-cyclohexadienone. The dienone portion is further reduced to cyclohexanone by the flavin-dependent reductase FrzD. The methyltranserases (MTs) FrzE and FrzF are then involved in the methylation at the C10' amine and the C4 phenolic oxygen, respectively. The order of the two MTs appear to be interchangeable. Cleavage of the C9-N10' bond by the dioxygenase FrzG then leads to formation of a conjugated iminium. In addition to the oxidation of C9, an additional dehydrogenation between C7 and C8 can occur to give a likely shunt product. The next biosynthetic step is the intramolecular aldol condensation catalyzed by the newly identified aldolase FrzH to yield an aza-tricyclic product with the formation of a C9-C3' bond. The short-chain dehydrogenase/reductase FrzI then produces dephospho-(-)-FR901483 that is phosphorylated at C4'-OH into (-)-FR901483 by the phosphotransferase FrzJ. This Cladobotryum sp protein is O-methyltransferase FrzF.